The chain runs to 74 residues: Defensin (74 aa).

A signal peptide spans 1–21 (MRGIYICLVFVLVCGLVSGLA). Residues 22-34 (DVPAESEMAHLRV) constitute a propeptide that is removed on maturation. 3 disulfides stabilise this stretch: C40–C61, C47–C69, and C51–C71.

As to expression, expressed in the hemocytes, fat body and ovaries.

It is found in the secreted. Its function is as follows. Antibacterial peptide mostly active against Gram-positive bacteria. The polypeptide is Defensin (Rhipicephalus microplus (Cattle tick)).